Reading from the N-terminus, the 1258-residue chain is uncharacterized protein (1258 aa).

The WD 1 repeat unit spans residues 55 to 93 (ELASEILGVCWQENGVLAAGISEGTWKRFLAGKQAINAE). The span at 112-128 (GGRTKERKDTGTSRQEK) shows a compositional bias: basic and acidic residues. The tract at residues 112-138 (GGRTKERKDTGTSRQEKFLSSSHPHTD) is disordered. WD repeat units lie at residues 640–679 (ETLGNILSAAFSPEGQLLATCDTDCHVRVWEVKSGKLLLI), 682–721 (GHSNWVRFVVFSPDGEILASCGADENVKLWSVRDGVCIKT), 724–763 (GHEHEVFSVAFHPDGETLASASGDKTIKLWDIQDGTCLQT), 766–807 (GHTD…RTLK), 809–849 (HTGW…KTYI), 850–889 (GHTNSVYSIAYSPDSKILVSGSGDRTIKLWDCQTHICIKT), 892–931 (GHTNEVCSVAFSPDGQTLACVSLDQSVRLWNCRTGQCLKA), 934–975 (GNTD…SSLE), 976–1017 (GHTD…QILL), 1019–1059 (HTDW…KTLS), 1060–1101 (EHSD…GILR), 1103–1143 (HSNR…KTLT), 1144–1183 (GHTNWVFDIAFSPDGKILASASHDQTVRIWDVNTGKCHHI), and 1186–1227 (GHTH…QILR).

This is an uncharacterized protein from Nostoc sp. (strain PCC 7120 / SAG 25.82 / UTEX 2576).